A 63-amino-acid chain; its full sequence is Small ribosomal subunit protein bS21 (63 aa).

The protein belongs to the bacterial ribosomal protein bS21 family.

The protein is Small ribosomal subunit protein bS21 of Parabacteroides distasonis (strain ATCC 8503 / DSM 20701 / CIP 104284 / JCM 5825 / NCTC 11152).